Reading from the N-terminus, the 178-residue chain is Peptide deformylase 2 (178 aa).

The Fe cation site is built by Cys101 and His143. Glu144 is an active-site residue. Position 147 (His147) interacts with Fe cation.

The protein belongs to the polypeptide deformylase family. Fe(2+) is required as a cofactor.

The catalysed reaction is N-terminal N-formyl-L-methionyl-[peptide] + H2O = N-terminal L-methionyl-[peptide] + formate. Removes the formyl group from the N-terminal Met of newly synthesized proteins. Requires at least a dipeptide for an efficient rate of reaction. N-terminal L-methionine is a prerequisite for activity but the enzyme has broad specificity at other positions. The polypeptide is Peptide deformylase 2 (Pseudomonas putida (strain ATCC 47054 / DSM 6125 / CFBP 8728 / NCIMB 11950 / KT2440)).